We begin with the raw amino-acid sequence, 70 residues long: MNDLKSLKSELTSKTVEELFKHLNLLKKELFNLRFQQTLGELKNTSRFSLVKKSIARIKTELTKRSSSGE.

Belongs to the universal ribosomal protein uL29 family.

This chain is Large ribosomal subunit protein uL29, found in Rickettsia bellii (strain OSU 85-389).